Here is a 250-residue protein sequence, read N- to C-terminus: Kallikrein-14 (250 aa).

The first 18 residues, 1–18, serve as a signal peptide directing secretion; that stretch reads MFLLLIILQALAVAIAQS. A propeptide spans 19–23 (activation peptide); it reads QGDHK. A Peptidase S1 domain is found at 24–248; the sequence is IIGGYRCVRN…YHSWIQRTMQ (225 aa). Cysteine 51 and cysteine 67 are disulfide-bonded. Residues histidine 66 and aspartate 110 each act as charge relay system in the active site. Disulfide bonds link cysteine 142–cysteine 209, cysteine 174–cysteine 188, and cysteine 199–cysteine 224. Serine 203 acts as the Charge relay system in catalysis.

It belongs to the peptidase S1 family. Kallikrein subfamily. Post-translationally, proteolytic cleavage of the activation peptide produces the active enzyme.

Its subcellular location is the secreted. The protein resides in the extracellular space. Its activity is regulated as follows. Inhibited by SERPINA1, SERPINC1, SERPINE1, SERPINF2, aprotinin, soybean, trypsin inhibitor and leupeptin. Inhibited by serine protease inhibitor SPINK5. Has an autoproteolytic activity which may have a regulatory effect. Activated by citrate and inhibited by zinc and to a lower extent by manganese. Serine-type endopeptidase with a dual trypsin-like and chymotrypsin-like substrate specificity. May activate/inactivate the proteinase-activated receptors F2R, F2RL1 and F2RL3 and other kallikreins including KLK1, KLK3, KLK5 and KLK11. May function in seminal clot liquefaction through direct cleavage of the semenogelin SEMG1 and SEMG2 and activation of KLK3. May function through desmoglein DSG1 cleavage in epidermal desquamation a process by which the most superficial corneocytes are shed from the skin surface. May be involved in several aspects of tumor progression including growth, invasion and angiogenesis. This chain is Kallikrein-14 (Klk14), found in Mus musculus (Mouse).